Reading from the N-terminus, the 291-residue chain is ATP synthase gamma chain (291 aa).

It belongs to the ATPase gamma chain family. As to quaternary structure, F-type ATPases have 2 components, CF(1) - the catalytic core - and CF(0) - the membrane proton channel. CF(1) has five subunits: alpha(3), beta(3), gamma(1), delta(1), epsilon(1). CF(0) has three main subunits: a, b and c.

The protein localises to the cell inner membrane. Produces ATP from ADP in the presence of a proton gradient across the membrane. The gamma chain is believed to be important in regulating ATPase activity and the flow of protons through the CF(0) complex. The chain is ATP synthase gamma chain from Xanthobacter autotrophicus (strain ATCC BAA-1158 / Py2).